An 83-amino-acid polypeptide reads, in one-letter code: MKTIFLGLIHIYQRFISPLTPATCRFYPTCSEYTREAIVVYGPFKGTWLGIKRISKCHPLHKGGFDPVPLKKTKHKKDKNINK.

Belongs to the UPF0161 family.

The protein resides in the cell membrane. In terms of biological role, could be involved in insertion of integral membrane proteins into the membrane. In Staphylococcus saprophyticus subsp. saprophyticus (strain ATCC 15305 / DSM 20229 / NCIMB 8711 / NCTC 7292 / S-41), this protein is Putative membrane protein insertion efficiency factor.